The primary structure comprises 205 residues: Outer-membrane lipoprotein carrier protein (205 aa).

The first 19 residues, 1–19, serve as a signal peptide directing secretion; sequence MKKIIICFIFVFSINISFA.

Belongs to the LolA family. As to quaternary structure, monomer.

The protein localises to the periplasm. Functionally, participates in the translocation of lipoproteins from the inner membrane to the outer membrane. Only forms a complex with a lipoprotein if the residue after the N-terminal Cys is not an aspartate (The Asp acts as a targeting signal to indicate that the lipoprotein should stay in the inner membrane). In Francisella tularensis subsp. novicida (strain U112), this protein is Outer-membrane lipoprotein carrier protein.